Consider the following 117-residue polypeptide: Immunoglobulin heavy variable 1-2 (117 aa).

Residues M1–S19 form the signal peptide. Q20 carries the pyrrolidone carboxylic acid modification. The tract at residues Q20–S44 is framework-1. One can recognise an Ig-like domain in the interval Q20 to R117. C41 and C115 are disulfide-bonded. The tract at residues G45 to Y52 is complementarity-determining-1. Residues M53–W69 form a framework-2 region. The interval I70–T77 is complementarity-determining-2. Positions N78 to C115 are framework-3. Residues A116–R117 form a complementarity-determining-3 region.

In terms of assembly, immunoglobulins are composed of two identical heavy chains and two identical light chains; disulfide-linked.

The protein resides in the secreted. Its subcellular location is the cell membrane. Functionally, v region of the variable domain of immunoglobulin heavy chains that participates in the antigen recognition. Immunoglobulins, also known as antibodies, are membrane-bound or secreted glycoproteins produced by B lymphocytes. In the recognition phase of humoral immunity, the membrane-bound immunoglobulins serve as receptors which, upon binding of a specific antigen, trigger the clonal expansion and differentiation of B lymphocytes into immunoglobulins-secreting plasma cells. Secreted immunoglobulins mediate the effector phase of humoral immunity, which results in the elimination of bound antigens. The antigen binding site is formed by the variable domain of one heavy chain, together with that of its associated light chain. Thus, each immunoglobulin has two antigen binding sites with remarkable affinity for a particular antigen. The variable domains are assembled by a process called V-(D)-J rearrangement and can then be subjected to somatic hypermutations which, after exposure to antigen and selection, allow affinity maturation for a particular antigen. The sequence is that of Immunoglobulin heavy variable 1-2 from Homo sapiens (Human).